A 353-amino-acid polypeptide reads, in one-letter code: Probable tRNA pseudouridine synthase B (353 aa).

Catalysis depends on aspartate 45, which acts as the Nucleophile. The PUA domain maps to 211 to 287; that stretch reads YPKIVAKKSA…DHIFVEAKHG (77 aa). The segment at 292–353 is disordered; that stretch reads VRDREKDVQR…TGVHRRPGSH (62 aa). Residues 309–328 show a composition bias toward basic and acidic residues; that stretch reads NIRDAAHGPDSRTGRGRKET. Positions 336 to 353 are enriched in basic residues; it reads RVRKLQNKTGVHRRPGSH.

The protein belongs to the pseudouridine synthase TruB family. Type 2 subfamily.

It carries out the reaction uridine(55) in tRNA = pseudouridine(55) in tRNA. Its function is as follows. Could be responsible for synthesis of pseudouridine from uracil-55 in the psi GC loop of transfer RNAs. The chain is Probable tRNA pseudouridine synthase B from Thermoplasma volcanium (strain ATCC 51530 / DSM 4299 / JCM 9571 / NBRC 15438 / GSS1).